The primary structure comprises 243 residues: uncharacterized protein (243 aa).

The N-terminal stretch at 1–19 is a signal peptide; it reads MKSLPLLGILAFAANRLSA. N-linked (GlcNAc...) asparagine glycans are attached at residues Asn112 and Asn206.

This is an uncharacterized protein from Encephalitozoon cuniculi (strain GB-M1) (Microsporidian parasite).